The sequence spans 1327 residues: ABC transporter 1 (1327 aa).

The next 6 membrane-spanning stretches (helical) occupy residues 47-67, 100-120, 170-190, 195-215, 228-248, and 276-296; these read LGIL…IIFG, VYVG…WNLF, KVGI…IAFV, LGGE…VGGY, VAGA…VHAF, and VAVQ…LAFW. In terms of domain architecture, ABC transmembrane type-1 1 spans 47–326; it reads LGILAAIASG…TTYTVIFLLV (280 aa). Residues asparagine 381, asparagine 390, and asparagine 406 are each glycosylated (N-linked (GlcNAc...) asparagine). The ABC transporter 1 domain maps to 386-663; sequence IELNNVSFAF…DGAYAGLVRL (278 aa). Residue 421–428 participates in ATP binding; that stretch reads GLSGSGKS. N-linked (GlcNAc...) asparagine glycosylation is found at asparagine 463 and asparagine 674. A run of 6 helical transmembrane segments spans residues 743 to 763, 785 to 805, 859 to 881, 888 to 910, 971 to 991, and 1005 to 1025; these read FLAL…AVVF, FYGL…LGSW, LTGS…IALS, IALV…VITM, LWLA…YWWG, and FFIV…MFTL. Residues 743–1031 form the ABC transmembrane type-1 2 domain; that stretch reads FLALTSAFVV…MFTLAPDVSR (289 aa). An N-linked (GlcNAc...) asparagine glycan is attached at asparagine 1050. The segment at 1054–1081 is disordered; it reads PCQHLKPGNDLEANAEPREKRPDQSQGG. The 240-residue stretch at 1084–1323 folds into the ABC transporter 2 domain; it reads VSLNNVKFSY…SESYKINALH (240 aa). 1119 to 1126 contributes to the ATP binding site; the sequence is GPSGAGKS.

The protein belongs to the ABC transporter superfamily. ABCB family. Multidrug resistance exporter (TC 3.A.1.201) subfamily.

Its subcellular location is the membrane. ABC transporter; part of the gene cluster that mediates the biosynthesis of hydroxamate-containing siderophores that play a critical role in virulence via intracellular iron acquisition during macrophage infection. Probably involved in the excretion of the extracellular siderophores. The chain is ABC transporter 1 from Ajellomyces capsulatus (Darling's disease fungus).